The sequence spans 144 residues: Large ribosomal subunit protein uL16 (144 aa).

The protein belongs to the universal ribosomal protein uL16 family. Part of the 50S ribosomal subunit.

Functionally, binds 23S rRNA and is also seen to make contacts with the A and possibly P site tRNAs. This is Large ribosomal subunit protein uL16 from Lysinibacillus sphaericus (strain C3-41).